A 428-amino-acid chain; its full sequence is Hercynine oxygenase (428 aa).

His-46 contributes to the Fe cation binding site. Gamma-L-glutamyl-L-cysteine is bound at residue 82–85; it reads RASR. Residues His-129 and His-133 each coordinate Fe cation. Gamma-L-glutamyl-L-cysteine is bound by residues Asp-411 and Arg-415.

This sequence belongs to the EgtB family. Monomer. Requires Fe(2+) as cofactor.

It carries out the reaction gamma-L-glutamyl-L-cysteine + hercynine + O2 = gamma-L-glutamyl-hercynylcysteine S-oxide + H2O. It participates in amino-acid biosynthesis; ergothioneine biosynthesis. Its function is as follows. Catalyzes the oxidative sulfurization of hercynine (N-alpha,N-alpha,N-alpha-trimethyl-L-histidine) into hercynyl-gamma-L-glutamyl-L-cysteine sulfoxide, a step in the biosynthesis pathway of ergothioneine. Cannot use the alternative thiols cysteine, N-acetylcysteine, or glutathione instead of gamma-glutamylcysteine as substrates, and histidine is a poor sulfur acceptor substrate compared to hercynine. This Mycolicibacterium smegmatis (strain ATCC 700084 / mc(2)155) (Mycobacterium smegmatis) protein is Hercynine oxygenase.